The primary structure comprises 123 residues: Polyadenylate-binding protein-interacting protein 2B (123 aa).

An N-acetylmethionine modification is found at M1. The span at 1-13 shows a compositional bias: polar residues; that stretch reads MNGSNMANTSPSV. Disordered regions lie at residues 1-30 and 91-123; these read MNGS…KENP and NGLS…GEKY. 2 stretches are compositionally biased toward basic and acidic residues: residues 14 to 30 and 113 to 123; these read KSKE…KENP and DAKEFIPGEKY.

This sequence belongs to the PAIP2 family. Interacts (via central acidic portion and C-terminus) with PABPC1 (via the second and third RRM domains and the C-terminus). In terms of processing, ubiquitinated in vitro. In terms of tissue distribution, expressed in brain, cervix, heart, liver, ovary, kidney, prostate and testis.

Its function is as follows. Inhibits translation of capped and polyadenylated mRNAs by displacing PABPC1 from the poly(A) tail. The chain is Polyadenylate-binding protein-interacting protein 2B (PAIP2B) from Homo sapiens (Human).